A 253-amino-acid chain; its full sequence is Cell division protein ZapD (253 aa).

It belongs to the ZapD family. As to quaternary structure, interacts with FtsZ.

The protein resides in the cytoplasm. In terms of biological role, cell division factor that enhances FtsZ-ring assembly. Directly interacts with FtsZ and promotes bundling of FtsZ protofilaments, with a reduction in FtsZ GTPase activity. This chain is Cell division protein ZapD, found in Bordetella bronchiseptica (strain ATCC BAA-588 / NCTC 13252 / RB50) (Alcaligenes bronchisepticus).